Consider the following 552-residue polypeptide: CTP synthase (552 aa).

The amidoligase domain stretch occupies residues 1–270 (MTKYVFVTGG…DRIICDELKL (270 aa)). S13 serves as a coordination point for CTP. S13 provides a ligand contact to UTP. ATP-binding positions include 14-19 (SLGKGI) and D71. 2 residues coordinate Mg(2+): D71 and E144. CTP contacts are provided by residues 151–153 (DIE), 191–196 (KTKPTQ), and K227. UTP contacts are provided by residues 191-196 (KTKPTQ) and K227. A Glutamine amidotransferase type-1 domain is found at 295 to 547 (TIGMVGKYVD…VEAALANKQA (253 aa)). G356 lines the L-glutamine pocket. The active-site Nucleophile; for glutamine hydrolysis is C383. L-glutamine contacts are provided by residues 384–387 (LGMQ), E407, and R473. Residues H520 and E522 contribute to the active site.

This sequence belongs to the CTP synthase family. In terms of assembly, homotetramer.

It carries out the reaction UTP + L-glutamine + ATP + H2O = CTP + L-glutamate + ADP + phosphate + 2 H(+). It catalyses the reaction L-glutamine + H2O = L-glutamate + NH4(+). The enzyme catalyses UTP + NH4(+) + ATP = CTP + ADP + phosphate + 2 H(+). It participates in pyrimidine metabolism; CTP biosynthesis via de novo pathway; CTP from UDP: step 2/2. Its activity is regulated as follows. Allosterically activated by GTP, when glutamine is the substrate; GTP has no effect on the reaction when ammonia is the substrate. The allosteric effector GTP functions by stabilizing the protein conformation that binds the tetrahedral intermediate(s) formed during glutamine hydrolysis. Inhibited by the product CTP, via allosteric rather than competitive inhibition. Catalyzes the ATP-dependent amination of UTP to CTP with either L-glutamine or ammonia as the source of nitrogen. Regulates intracellular CTP levels through interactions with the four ribonucleotide triphosphates. The sequence is that of CTP synthase from Burkholderia vietnamiensis (strain G4 / LMG 22486) (Burkholderia cepacia (strain R1808)).